We begin with the raw amino-acid sequence, 198 residues long: Small ribosomal subunit protein uS4 (198 aa).

The S4 RNA-binding domain maps to 91-154; the sequence is SRLDNVVYRL…KNLNIVQEAV (64 aa).

It belongs to the universal ribosomal protein uS4 family. In terms of assembly, part of the 30S ribosomal subunit. Contacts protein S5. The interaction surface between S4 and S5 is involved in control of translational fidelity.

In terms of biological role, one of the primary rRNA binding proteins, it binds directly to 16S rRNA where it nucleates assembly of the body of the 30S subunit. Its function is as follows. With S5 and S12 plays an important role in translational accuracy. The sequence is that of Small ribosomal subunit protein uS4 from Onion yellows phytoplasma (strain OY-M).